The chain runs to 1429 residues: Protein lin-12 (1429 aa).

The first 15 residues, Met-1–Leu-15, serve as a signal peptide directing secretion. At Ser-16–Asn-908 the chain is on the extracellular side. EGF-like domains follow at residues His-20–Glu-61 and Thr-114–Glu-150. 9 cysteine pairs are disulfide-bonded: Cys-24/Cys-35, Cys-29/Cys-49, Cys-51/Cys-60, Cys-118/Cys-129, Cys-123/Cys-138, Cys-140/Cys-149, Cys-156/Cys-169, Cys-163/Cys-178, and Cys-180/Cys-189. The N-linked (GlcNAc...) asparagine glycan is linked to Asn-41. One can recognise an EGF-like 3; calcium-binding domain in the interval Asp-152–Leu-190. The N-linked (GlcNAc...) asparagine glycan is linked to Asn-165. N-linked (GlcNAc...) asparagine glycosylation is present at Asn-194. EGF-like domains lie at Lys-201–Glu-246, Lys-250–Gln-285, Gly-287–Glu-323, and Glu-323–Glu-363. 30 disulfides stabilise this stretch: Cys-205/Cys-227, Cys-221/Cys-234, Cys-236/Cys-245, Cys-254/Cys-264, Cys-259/Cys-273, Cys-275/Cys-284, Cys-291/Cys-302, Cys-296/Cys-311, Cys-313/Cys-322, Cys-327/Cys-339, Cys-334/Cys-351, Cys-353/Cys-362, Cys-369/Cys-381, Cys-375/Cys-390, Cys-392/Cys-401, Cys-408/Cys-419, Cys-413/Cys-429, Cys-431/Cys-440, Cys-462/Cys-475, Cys-469/Cys-480, Cys-482/Cys-491, Cys-507/Cys-518, Cys-512/Cys-529, Cys-531/Cys-540, Cys-547/Cys-558, Cys-552/Cys-567, Cys-569/Cys-578, Cys-586/Cys-597, Cys-591/Cys-607, and Cys-609/Cys-618. Residues Asp-365–Asp-402 enclose the EGF-like 8; calcium-binding domain. N-linked (GlcNAc...) asparagine glycosylation occurs at Asn-378. 5 EGF-like domains span residues Pro-404 to Glu-441, Gly-449 to Glu-492, Ser-503 to Glu-541, His-543 to Glu-579, and Lys-582 to Glu-619. An N-linked (GlcNAc...) asparagine glycan is attached at Asn-515. N-linked (GlcNAc...) asparagine glycosylation is present at Asn-623. Disulfide bonds link Cys-638–Cys-661, Cys-643–Cys-656, Cys-652–Cys-668, Cys-678–Cys-702, Cys-684–Cys-697, Cys-693–Cys-709, Cys-716–Cys-742, Cys-724–Cys-737, and Cys-733–Cys-749. LNR repeat units lie at residues Cys-638–Pro-674, Cys-678–Cys-709, and Cys-716–Asn-754. Residues Asn-751, Asn-754, and Asn-900 are each glycosylated (N-linked (GlcNAc...) asparagine). A helical transmembrane segment spans residues Ala-909–Gly-931. Topologically, residues Asn-932–Phe-1429 are cytoplasmic. Residues Arg-933 to Glu-952 are RAM domain. 5 ANK repeats span residues Asp-1093–Ile-1122, Ser-1126–Glu-1158, Asn-1162–Tyr-1194, Lys-1206–Lys-1236, and Asp-1240–Ala-1269. Residues Ile-1308–Asn-1374 are disordered. The segment covering Lys-1319 to Arg-1330 has biased composition (basic residues). Positions His-1361 to Asn-1374 are enriched in polar residues.

The protein belongs to the NOTCH family. May interact with dsl-1. May interact with lag-2. May interact with osm-11. Interacts with sel-10. In terms of assembly, when activated, the lin-12/Notch intracellular domain (NICD) can become a component of a complex consisting of at least the NICD, lag-1 and sel-8/lag-3. The NICD probably facilitates ordered assembly of the ternary complex via allosteric interactions of its RBP-j associated molecule (RAM) domain with lag-1. In terms of processing, upon binding its ligands, it is cleaved (S2 cleavage) in its extracellular domain, close to the transmembrane domain. S2 cleavage is probably mediated by the metalloproteases adm-4 and sup-17. It is then cleaved (S3 cleavage) downstream of its transmembrane domain, releasing it from the cell membrane; S3 cleavage requires a multiprotein gamma-secretase complex, which may include presenilin sel-12.

The protein resides in the apical cell membrane. Its subcellular location is the nucleus. In terms of biological role, essential signaling protein which has a major role in many developmental processes; involved in cell fate decisions that require cell-cell interactions. Probable membrane-bound receptor for putative ligands lag-2, apx-1, dsl-1 and osm-11. Upon ligand activation, and releasing from the cell membrane, the lin-12/Notch intracellular domain (NICD) forms a transcriptional activator complex with lag-1 and lag-3 and regulates expression of various genes. Required for ventral cell fates in the postembryonic mesodermal lineage (M lineage) and in uterine precursor cells. Activity in cell fate decisions and tumorigenesis is negatively regulated by sel-10. Best known for involvement in cell-fate decisions during development, but also plays roles in other events. Regulates recovery from the dauer larval state. Modulates chemosensory avoidance of octanol and quiescence during molting. Promotes basement membrane mobility during tissue remodeling. Involved in establishing left-right asymmetry during intestinal organogenesis. The sequence is that of Protein lin-12 from Caenorhabditis elegans.